A 297-amino-acid chain; its full sequence is Vacuolar protein sorting-associated protein 26C (297 aa).

Belongs to the VPS26 family. As to quaternary structure, component of the commander complex that is essential for endosomal recycling of transmembrane cargos; the commander complex is composed of the CCC subcomplex and the retriever subcomplex. Component of the heterotrimeric retriever complex consisting of VPS26C, VPS29 and VPS35L; within the complex interacts with VPS35L. Interacts with SNX17 (via C-terminus); the interaction is direct and associates SNX17 with the retriever complex. Interacts with SNX31; the interaction is direct. In terms of tissue distribution, ubiquitously expressed.

The protein resides in the endosome. Component of the commander complex that is essential for endosomal recycling of transmembrane cargos; the commander complex is composed of the CCC subcomplex and the retriever subcomplex. Component of the retriever complex, which is a heterotrimeric complex related to retromer cargo-selective complex (CSC) and essential for retromer-independent retrieval and recycling of numerous cargos such as integrin alpha-5/beta-1 (ITGA5:ITGB1). The recruitment of the retriever complex to the endosomal membrane involves CCC and WASH complexes. In the endosomes, drives the retriever and recycling of NxxY-motif-containing cargo proteins by coupling to SNX17, a cargo essential for the homeostatic maintenance of numerous cell surface proteins associated with processes that include cell migration, cell adhesion, nutrient supply and cell signaling. Its function is as follows. (Microbial infection) The heterotrimeric retriever complex, in collaboration with the CCC complex, mediates the exit of human papillomavirus to the cell surface. This chain is Vacuolar protein sorting-associated protein 26C, found in Homo sapiens (Human).